Here is a 102-residue protein sequence, read N- to C-terminus: Probable endoribonuclease MazF2 (102 aa).

The protein belongs to the PemK/MazF family. As to quaternary structure, forms a complex with cognate antitoxin MazE2.

Toxic component of a type II toxin-antitoxin (TA) system. Acts as an endoribonuclease. Neutralized by coexpression with cognate antitoxin MazE2. The sequence is that of Probable endoribonuclease MazF2 (mazF2) from Mycobacterium tuberculosis (strain CDC 1551 / Oshkosh).